Here is a 242-residue protein sequence, read N- to C-terminus: MNLIIDIGNSVAKLAIFDKGELVEVFRGSNHSLDCLPMLCSRYPLKRGIIASVITLSNTIRHQLERLPFNIIELSHETPVPVTNLYKTPQTLGMDRLAAVVAANWLKPGHDVLVIDAGTCVTYDFIDADGAYHGGNISPGMRMRFKALNIFTDKLPKVSAKGEVPMYGQSTETAIRAGVIRGMEFEMSGYITHLQKNYPELLVFLTGGDEFSFDTKLKSIIFADRFLVLKGLNRILSYNDKL.

ATP is bound at residue 6 to 13; sequence DIGNSVAK. Residues Tyr-86 and 93–96 each bind substrate; that span reads GMDR. Catalysis depends on Asp-95, which acts as the Proton acceptor. Asp-116 serves as a coordination point for K(+). Position 119 (Thr-119) interacts with ATP. Residue Thr-171 coordinates substrate.

It belongs to the type III pantothenate kinase family. As to quaternary structure, homodimer. The cofactor is NH4(+). It depends on K(+) as a cofactor.

It is found in the cytoplasm. It catalyses the reaction (R)-pantothenate + ATP = (R)-4'-phosphopantothenate + ADP + H(+). Its pathway is cofactor biosynthesis; coenzyme A biosynthesis; CoA from (R)-pantothenate: step 1/5. In terms of biological role, catalyzes the phosphorylation of pantothenate (Pan), the first step in CoA biosynthesis. The sequence is that of Type III pantothenate kinase from Phocaeicola vulgatus (strain ATCC 8482 / DSM 1447 / JCM 5826 / CCUG 4940 / NBRC 14291 / NCTC 11154) (Bacteroides vulgatus).